The sequence spans 625 residues: Basic helix-loop-helix ARNT-like protein 1 (625 aa).

The segment at 1–60 is disordered; it reads MADQRMDISSTISDFMSPGPTDLLSSSLGTSGVDCNRKRKGSSTDYQESMDTDKDDPHGR. Residue serine 17 is modified to Phosphoserine; by GSK3-beta. Residues 17 to 32 are compositionally biased toward low complexity; sequence SPGPTDLLSSSLGTSG. Threonine 21 carries the phosphothreonine; by GSK3-beta modification. The Nuclear localization signal motif lies at 36–41; the sequence is NRKRKG. Over residues 51-60 the composition is skewed to basic and acidic residues; it reads DTDKDDPHGR. A bHLH domain is found at 72 to 125; that stretch reads NAREAHSQIEKRRRDKMNSFIDELASLVPTCNAMSRKLDKLTVLRMAVQHMKTL. The residue at position 78 (serine 78) is a Phosphoserine. At serine 90 the chain carries Phosphoserine; by CK2. Residues 142–152 carry the Nuclear export signal 1 motif; sequence LSDDELKHLIL. The region spanning 143 to 215 is the PAS 1 domain; the sequence is SDDELKHLIL…EQLSSSDTAP (73 aa). Lysine 252 participates in a covalent cross-link: Glycyl lysine isopeptide (Lys-Gly) (interchain with G-Cter in SUMO2 and SUMO3). A Glycyl lysine isopeptide (Lys-Gly) (interchain with G-Cter in SUMO); alternate cross-link involves residue lysine 259. Lysine 259 is covalently cross-linked (Glycyl lysine isopeptide (Lys-Gly) (interchain with G-Cter in SUMO2); alternate). The region spanning 325 to 395 is the PAS 2 domain; the sequence is PQPVNGEIRV…ECHRQVLQTR (71 aa). A Nuclear export signal 2 motif is present at residues 360–368; that stretch reads LAYLPQELL. The 44-residue stretch at 400–443 folds into the PAC domain; the sequence is TNCYKFKIKDGSFITLRSRWFSFMNPWTKEVEYIVSTNTVVLAN. Disordered regions lie at residues 454–491 and 510–594; these read QLTA…RAGA and GSSP…SPSN. The interval 507–587 is interaction with CIART; the sequence is RIRGSSPSSC…IGIDMIDNDQ (81 aa). A compositionally biased stretch (low complexity) spans 510–520; sequence GSSPSSCGSSP. An N6-acetyllysine modification is found at lysine 537.

Component of the circadian clock oscillator which includes the CRY1/2 proteins, CLOCK or NPAS2, BMAL1 or BMAL2, CSNK1D and/or CSNK1E, TIMELESS and the PER1/2/3 proteins. Forms a heterodimer with CLOCK. The CLOCK-BMAL1 heterodimer is required for E-box-dependent transactivation, for CLOCK nuclear translocation and degradation, and, for phosphorylation of both CLOCK and BMAL1. Part of a nuclear complex which also includes RACK1 and PRKCA; RACK1 and PRKCA are recruited to the complex in a circadian manner. Interacts with NPAS2. Interacts with EZH2. Interacts with SUMO3. Interacts with SIRT1. Interacts with AHR. Interacts with ID1, ID2 and ID3. Interacts with DDX4. Interacts with OGT. Interacts with EED and SUZ12. Interacts with MTA1. Interacts with CIART. Interacts with HSP90. Interacts with KAT2B and EP300. Interacts with BHLHE40/DEC1 and BHLHE41/DEC2. Interacts with RELB and the interaction is enhanced in the presence of CLOCK. Interacts with PER1, PER2, CRY1 and CRY2 and this interaction requires a translocation to the nucleus. Interaction of the CLOCK-BMAL1 heterodimer with PER or CRY inhibits transcription activation. Interaction of the CLOCK-BMAL1 with CRY1 is independent of DNA but with PER2 is off DNA. The CLOCK-BMAL1 heterodimer interacts with GSK3B. Interacts with KDM5A. Interacts with KMT2A; in a circadian manner. Interacts with UBE3A. Interacts with PRKCG. Interacts with MAGEL2. Interacts with NCOA2. Interacts with THRAP3. The CLOCK-BMAL1 heterodimer interacts with PASD1. Interacts with PASD1. Interacts with USP9X. Interacts with PIWIL2 (via PIWI domain). Interacts with HDAC3. Interacts with HNF4A. Ubiquitinated, leading to its proteasomal degradation. Deubiquitinated by USP9X. In terms of processing, O-glycosylated; contains O-GlcNAc. O-glycosylation by OGT prevents protein degradation by inhibiting ubiquitination. It also stabilizes the CLOCK-BMAL1 heterodimer thereby increasing CLOCK-BMAL1-mediated transcription of genes in the negative loop of the circadian clock such as PER1/2/3 and CRY1/2. Post-translationally, acetylated on Lys-537 by CLOCK during the repression phase of the circadian cycle. Acetylation facilitates recruitment of CRY1 protein and initiates the repression phase of the circadian cycle. Acetylated at Lys-537 by KAT5 during the activation phase of the cycle, leading to recruitment of the positive transcription elongation factor b (P-TEFb) and BRD4, followed by productive elongation of circadian transcripts. Deacetylated by SIRT1, which may result in decreased protein stability. Phosphorylated upon dimerization with CLOCK. Phosphorylation enhances the transcriptional activity, alters the subcellular localization and decreases the stability of the CLOCK-BMAL1 heterodimer by promoting its degradation. Phosphorylation shows circadian variations in the liver with a peak between CT10 to CT14. Phosphorylation at Ser-90 by CK2 is essential for its nuclear localization, its interaction with CLOCK and controls CLOCK nuclear entry. Dephosphorylation at Ser-78 is important for dimerization with CLOCK and transcriptional activity. In terms of processing, sumoylated on Lys-259 upon dimerization with CLOCK. Predominantly conjugated to poly-SUMO2/3 rather than SUMO1 and the level of these conjugates undergo rhythmic variation, peaking at CT9-CT12. Sumoylation localizes it exclusively to the PML body and promotes its ubiquitination in the PML body, ubiquitin-dependent proteasomal degradation and the transcriptional activity of the CLOCK-BMAL1 heterodimer. Post-translationally, undergoes lysosome-mediated degradation in a time-dependent manner in the liver.

Its subcellular location is the nucleus. The protein localises to the cytoplasm. The protein resides in the PML body. Its function is as follows. Transcriptional activator which forms a core component of the circadian clock. The circadian clock, an internal time-keeping system, regulates various physiological processes through the generation of approximately 24 hour circadian rhythms in gene expression, which are translated into rhythms in metabolism and behavior. It is derived from the Latin roots 'circa' (about) and 'diem' (day) and acts as an important regulator of a wide array of physiological functions including metabolism, sleep, body temperature, blood pressure, endocrine, immune, cardiovascular, and renal function. Consists of two major components: the central clock, residing in the suprachiasmatic nucleus (SCN) of the brain, and the peripheral clocks that are present in nearly every tissue and organ system. Both the central and peripheral clocks can be reset by environmental cues, also known as Zeitgebers (German for 'timegivers'). The predominant Zeitgeber for the central clock is light, which is sensed by retina and signals directly to the SCN. The central clock entrains the peripheral clocks through neuronal and hormonal signals, body temperature and feeding-related cues, aligning all clocks with the external light/dark cycle. Circadian rhythms allow an organism to achieve temporal homeostasis with its environment at the molecular level by regulating gene expression to create a peak of protein expression once every 24 hours to control when a particular physiological process is most active with respect to the solar day. Transcription and translation of core clock components (CLOCK, NPAS2, BMAL1, BMAL2, PER1, PER2, PER3, CRY1 and CRY2) plays a critical role in rhythm generation, whereas delays imposed by post-translational modifications (PTMs) are important for determining the period (tau) of the rhythms (tau refers to the period of a rhythm and is the length, in time, of one complete cycle). A diurnal rhythm is synchronized with the day/night cycle, while the ultradian and infradian rhythms have a period shorter and longer than 24 hours, respectively. Disruptions in the circadian rhythms contribute to the pathology of cardiovascular diseases, cancer, metabolic syndromes and aging. A transcription/translation feedback loop (TTFL) forms the core of the molecular circadian clock mechanism. Transcription factors, CLOCK or NPAS2 and BMAL1 or BMAL2, form the positive limb of the feedback loop, act in the form of a heterodimer and activate the transcription of core clock genes and clock-controlled genes (involved in key metabolic processes), harboring E-box elements (5'-CACGTG-3') within their promoters. The core clock genes: PER1/2/3 and CRY1/2 which are transcriptional repressors form the negative limb of the feedback loop and interact with the CLOCK|NPAS2-BMAL1|BMAL2 heterodimer inhibiting its activity and thereby negatively regulating their own expression. This heterodimer also activates nuclear receptors NR1D1/2 and RORA/B/G, which form a second feedback loop and which activate and repress BMAL1 transcription, respectively. BMAL1 positively regulates myogenesis and negatively regulates adipogenesis via the transcriptional control of the genes of the canonical Wnt signaling pathway. Plays a role in normal pancreatic beta-cell function; regulates glucose-stimulated insulin secretion via the regulation of antioxidant genes NFE2L2/NRF2 and its targets SESN2, PRDX3, CCLC and CCLM. Negatively regulates the mTORC1 signaling pathway; regulates the expression of MTOR and DEPTOR. Controls diurnal oscillations of Ly6C inflammatory monocytes; rhythmic recruitment of the PRC2 complex imparts diurnal variation to chemokine expression that is necessary to sustain Ly6C monocyte rhythms. Regulates the expression of HSD3B2, STAR, PTGS2, CYP11A1, CYP19A1 and LHCGR in the ovary and also the genes involved in hair growth. Plays an important role in adult hippocampal neurogenesis by regulating the timely entry of neural stem/progenitor cells (NSPCs) into the cell cycle and the number of cell divisions that take place prior to cell-cycle exit. Regulates the circadian expression of CIART and KLF11. The CLOCK-BMAL1 heterodimer regulates the circadian expression of SERPINE1/PAI1, VWF, B3, CCRN4L/NOC, NAMPT, DBP, MYOD1, PPARGC1A, PPARGC1B, SIRT1, GYS2, F7, NGFR, GNRHR, BHLHE40/DEC1, ATF4, MTA1, KLF10 and also genes implicated in glucose and lipid metabolism. Promotes rhythmic chromatin opening, regulating the DNA accessibility of other transcription factors. The NPAS2-BMAL1 heterodimer positively regulates the expression of MAOA, F7 and LDHA and modulates the circadian rhythm of daytime contrast sensitivity by regulating the rhythmic expression of adenylate cyclase type 1 (ADCY1) in the retina. The preferred binding motif for the CLOCK-BMAL1 heterodimer is 5'-CACGTGA-3', which contains a flanking adenine nucleotide at the 3-prime end of the canonical 6-nucleotide E-box sequence. CLOCK specifically binds to the half-site 5'-CAC-3', while BMAL1 binds to the half-site 5'-GTGA-3'. The CLOCK-BMAL1 heterodimer also recognizes the non-canonical E-box motifs 5'-AACGTGA-3' and 5'-CATGTGA-3'. Essential for the rhythmic interaction of CLOCK with ASS1 and plays a critical role in positively regulating CLOCK-mediated acetylation of ASS1. Plays a role in protecting against lethal sepsis by limiting the expression of immune checkpoint protein CD274 in macrophages in a PKM2-dependent manner. Regulates the diurnal rhythms of skeletal muscle metabolism via transcriptional activation of genes promoting triglyceride synthesis (DGAT2) and metabolic efficiency (COQ10B). This is Basic helix-loop-helix ARNT-like protein 1 (BMAL1) from Pongo abelii (Sumatran orangutan).